The following is a 233-amino-acid chain: 27 kDa hemolymph glycoprotein (233 aa).

Positions 1-17 (MIWKTLIVAFMATAVLA) are cleaved as a signal peptide. N-linked (GlcNAc...) asparagine glycosylation is found at asparagine 125 and asparagine 156.

Belongs to the UPF0408 family. N-glycosylated. In terms of tissue distribution, hemolymph.

It localises to the secreted. The protein is 27 kDa hemolymph glycoprotein of Manduca sexta (Tobacco hawkmoth).